The following is a 65-amino-acid chain: Hirudin-3B' (65 aa).

Residues V1–Y3 form an interaction with thrombin active site region. Cystine bridges form between C6-C14, C16-C28, and C22-C39. Positions V40–Q65 are disordered. The O-linked (GalNAc...) threonine glycan is linked to T45. Positions D55–Q65 are interaction with fibrinogen-binding exosite of thrombin. A compositionally biased stretch (acidic residues) spans D55–Q65. The residue at position 63 (Y63) is a Sulfotyrosine.

This sequence belongs to the protease inhibitor I14 (hirudin) family.

The protein resides in the secreted. Hirudin is a potent thrombin-specific protease inhibitor. It forms a stable non-covalent complex with alpha-thrombin, thereby abolishing its ability to cleave fibrinogen. In Hirudo medicinalis (Medicinal leech), this protein is Hirudin-3B'.